A 326-amino-acid polypeptide reads, in one-letter code: UDP-N-acetylglucosamine transporter (326 aa).

8 helical membrane-spanning segments follow: residues 4-24 (NLKY…VLTM), 38-58 (LSST…IFLV), 136-156 (LGVY…FVQW), 174-194 (FVGL…GVYF), 212-232 (LGFF…GELV), 243-263 (QLTW…AAVI), 269-289 (ILKG…SYFW), and 293-313 (FVPT…TFLY).

Belongs to the nucleotide-sugar transporter family. SLC35A subfamily. In terms of assembly, interacts with SLC35A2; the interaction is reduced in the presence of SLC35A4. Found in a complex with SLC35A2 and SLC35A4. Interacts with MGAT4B. O-Glcnacylation regulates the stability of SLC35A3 and the specific complex formation with MGAT4B.

It is found in the golgi apparatus membrane. It carries out the reaction UMP(out) + UDP-N-acetyl-alpha-D-glucosamine(in) = UMP(in) + UDP-N-acetyl-alpha-D-glucosamine(out). In terms of biological role, transports diphosphate-N-acetylglucosamine (UDP-GlcNAc) from the cytosol into the lumen of the Golgi apparatus, functioning as an antiporter that exchanges UDP-N-acetyl-alpha-D-glucosamine for UMP. May supply UDP-GlcNAc as substrate for Golgi-resident glycosyltransferases that generate highly branched, multiantennary complex N-glycans and keratan sulfate. However, the exact role of SLC35A3 still needs to be elucidated, it could be a member of a catalytically more efficient multiprotein complex rather than function independently as a single transporter. The protein is UDP-N-acetylglucosamine transporter (Slc35a3) of Mus musculus (Mouse).